The following is a 248-amino-acid chain: Probable transcriptional regulatory protein RPB_4273 (248 aa).

Residues 1 to 22 form a disordered region; it reads MAGHSQFKNIMHRKGKQDAQRS.

It belongs to the TACO1 family.

Its subcellular location is the cytoplasm. The sequence is that of Probable transcriptional regulatory protein RPB_4273 from Rhodopseudomonas palustris (strain HaA2).